Reading from the N-terminus, the 59-residue chain is Alpha-like toxin CsEv5 (59 aa).

An LCN-type CS-alpha/beta domain is found at 1–59; it reads KDGYPVDSKGCKLSCVANNYCDNQCKMKKASGGHCYAMSCYCEGLPENAKVSDSATNIC. Disulfide bonds link cysteine 11/cysteine 59, cysteine 15/cysteine 35, cysteine 21/cysteine 40, and cysteine 25/cysteine 42.

This sequence belongs to the long (4 C-C) scorpion toxin superfamily. Sodium channel inhibitor family. As to expression, expressed by the venom gland.

It localises to the secreted. Binds voltage-independently sodium channels (Nav) and inhibits the inactivation of the activated channels, thereby blocking neuronal transmission. Is highly toxic to insects and barely toxic to mammals. As it does not compete with the classical alpha-toxin AaH2, this toxin is considered as an alpha-like toxin. This is Alpha-like toxin CsEv5 from Centruroides sculpturatus (Arizona bark scorpion).